The following is a 247-amino-acid chain: tRNA uridine(34) hydroxylase (247 aa).

The 95-residue stretch at 124 to 218 (TKQNVILIDT…YLEDTHNKNN (95 aa)) folds into the Rhodanese domain. Cys178 functions as the Cysteine persulfide intermediate in the catalytic mechanism.

It belongs to the TrhO family.

The catalysed reaction is uridine(34) in tRNA + AH2 + O2 = 5-hydroxyuridine(34) in tRNA + A + H2O. Catalyzes oxygen-dependent 5-hydroxyuridine (ho5U) modification at position 34 in tRNAs. The chain is tRNA uridine(34) hydroxylase from Rickettsia prowazekii (strain Madrid E).